We begin with the raw amino-acid sequence, 178 residues long: MSSNECFKCGRSGHWARECPTGGGRGRGMRSRGRGGFTSDRGFQFVSSSLPDICYRCGESGHLAKDCDLQEDEACYNCGRGGHIAKDCKEPKREREQCCYNCGKPGHLARDCDHADEQKCYSCGEFGHIQKDCTKVKCYRCGETGHVAINCSKTSEVNCYRCGESGHLARECTIEATA.

An N-acetylserine modification is found at Ser-2. The CCHC-type 1 zinc finger occupies 4 to 21 (NECFKCGRSGHWARECPT). Lys-8 is modified (N6-acetyllysine). 2 positions are modified to omega-N-methylarginine; by PRMT1: Arg-25 and Arg-27. Positions 25–38 (RGRGMRSRGRGGFT) are RNA-binding Arg/Gly-rich region (RGG-box). 2 positions are modified to omega-N-methylarginine: Arg-32 and Arg-34. Ser-49 is subject to Phosphoserine. CCHC-type zinc fingers lie at residues 52-69 (DICY…DCDL), 72-90 (DEAC…DCKE), 97-114 (QCCY…DCDH), 118-135 (QKCY…DCTK), 136-153 (VKCY…NCSK), and 157-174 (VNCY…ECTI). Residues Asp-72, Gly-79, and Arg-80 each carry the omega-N-methylarginine modification.

In terms of assembly, associates with the 40S ribosomal subunit, the 80S ribosome and with polysomes. Arginine methylation by PRMT1 in the Arg/Gly-rich region impedes RNA binding.

It localises to the nucleus. Its subcellular location is the cytoplasm. The protein localises to the endoplasmic reticulum. In terms of biological role, single-stranded DNA-binding protein that preferentially binds to the sterol regulatory element (SRE) sequence 5'-GTGCGGTG-3', and thereby mediates transcriptional repression. Has a role as transactivator of the Myc promoter. Binds single-stranded RNA in a sequence-specific manner. Binds G-rich elements in target mRNA coding sequences. Prevents G-quadruplex structure formation in vitro, suggesting a role in supporting translation by resolving stable structures on mRNAs. The chain is CCHC-type zinc finger nucleic acid binding protein from Mus musculus (Mouse).